The sequence spans 420 residues: Serine hydroxymethyltransferase (420 aa).

(6S)-5,6,7,8-tetrahydrofolate is bound by residues L121 and 125–127 (GHL). K230 carries the post-translational modification N6-(pyridoxal phosphate)lysine. (6S)-5,6,7,8-tetrahydrofolate-binding positions include E246 and 354-356 (SPF).

This sequence belongs to the SHMT family. As to quaternary structure, homodimer. The cofactor is pyridoxal 5'-phosphate.

It is found in the cytoplasm. The enzyme catalyses (6R)-5,10-methylene-5,6,7,8-tetrahydrofolate + glycine + H2O = (6S)-5,6,7,8-tetrahydrofolate + L-serine. Its pathway is one-carbon metabolism; tetrahydrofolate interconversion. It participates in amino-acid biosynthesis; glycine biosynthesis; glycine from L-serine: step 1/1. In terms of biological role, catalyzes the reversible interconversion of serine and glycine with tetrahydrofolate (THF) serving as the one-carbon carrier. This reaction serves as the major source of one-carbon groups required for the biosynthesis of purines, thymidylate, methionine, and other important biomolecules. Also exhibits THF-independent aldolase activity toward beta-hydroxyamino acids, producing glycine and aldehydes, via a retro-aldol mechanism. This Rickettsia prowazekii (strain Madrid E) protein is Serine hydroxymethyltransferase.